The sequence spans 405 residues: Glucose-1-phosphate adenylyltransferase (405 aa).

Alpha-D-glucose 1-phosphate-binding positions include Tyr-96, Gly-161, 176–177, and Ser-194; that span reads EK.

It belongs to the bacterial/plant glucose-1-phosphate adenylyltransferase family. In terms of assembly, homotetramer.

The enzyme catalyses alpha-D-glucose 1-phosphate + ATP + H(+) = ADP-alpha-D-glucose + diphosphate. Its pathway is glycan biosynthesis; glycogen biosynthesis. In terms of biological role, involved in the biosynthesis of ADP-glucose, a building block required for the elongation reactions to produce glycogen. Catalyzes the reaction between ATP and alpha-D-glucose 1-phosphate (G1P) to produce pyrophosphate and ADP-Glc. This Photobacterium profundum (strain SS9) protein is Glucose-1-phosphate adenylyltransferase.